Consider the following 205-residue polypeptide: Holliday junction branch migration complex subunit RuvA (205 aa).

Positions 1–67 are domain I; sequence MIGWLKGDVQ…ADNLQLFGFL (67 aa). Residues 68-146 are domain II; that stretch reads QLAERDLFRE…DSVASTGPER (79 aa). The tract at residues 147 to 155 is flexible linker; the sequence is NQLDPVAPD. The segment at 155–205 is domain III; that stretch reads DLIATLETLGFETHEIRDALQRLNGMGGPQDGDDDDAWLRACIKLMSSTDP.

The protein belongs to the RuvA family. Homotetramer. Forms an RuvA(8)-RuvB(12)-Holliday junction (HJ) complex. HJ DNA is sandwiched between 2 RuvA tetramers; dsDNA enters through RuvA and exits via RuvB. An RuvB hexamer assembles on each DNA strand where it exits the tetramer. Each RuvB hexamer is contacted by two RuvA subunits (via domain III) on 2 adjacent RuvB subunits; this complex drives branch migration. In the full resolvosome a probable DNA-RuvA(4)-RuvB(12)-RuvC(2) complex forms which resolves the HJ.

The protein localises to the cytoplasm. Functionally, the RuvA-RuvB-RuvC complex processes Holliday junction (HJ) DNA during genetic recombination and DNA repair, while the RuvA-RuvB complex plays an important role in the rescue of blocked DNA replication forks via replication fork reversal (RFR). RuvA specifically binds to HJ cruciform DNA, conferring on it an open structure. The RuvB hexamer acts as an ATP-dependent pump, pulling dsDNA into and through the RuvAB complex. HJ branch migration allows RuvC to scan DNA until it finds its consensus sequence, where it cleaves and resolves the cruciform DNA. This is Holliday junction branch migration complex subunit RuvA from Parasynechococcus marenigrum (strain WH8102).